Reading from the N-terminus, the 199-residue chain is Protein GrpE (199 aa).

The interval 1–50 (MAKKSTRTTPEDSQASTTDSAATSTASEATQAATSATDDQAEQTTAVDPT) is disordered. The segment covering 11 to 46 (EDSQASTTDSAATSTASEATQAATSATDDQAEQTTA) has biased composition (low complexity).

It belongs to the GrpE family. As to quaternary structure, homodimer.

Its subcellular location is the cytoplasm. Functionally, participates actively in the response to hyperosmotic and heat shock by preventing the aggregation of stress-denatured proteins, in association with DnaK and GrpE. It is the nucleotide exchange factor for DnaK and may function as a thermosensor. Unfolded proteins bind initially to DnaJ; upon interaction with the DnaJ-bound protein, DnaK hydrolyzes its bound ATP, resulting in the formation of a stable complex. GrpE releases ADP from DnaK; ATP binding to DnaK triggers the release of the substrate protein, thus completing the reaction cycle. Several rounds of ATP-dependent interactions between DnaJ, DnaK and GrpE are required for fully efficient folding. The polypeptide is Protein GrpE (Lactiplantibacillus plantarum (strain ATCC BAA-793 / NCIMB 8826 / WCFS1) (Lactobacillus plantarum)).